A 580-amino-acid polypeptide reads, in one-letter code: High affinity choline transporter 1 (580 aa).

Residues Met1–Glu6 lie on the Extracellular side of the membrane. Residues Gly7–Trp27 traverse the membrane as a helical segment. The Cytoplasmic segment spans residues Lys28–Asp48. Residues Ile49–Asn69 form a helical membrane-spanning segment. The Extracellular portion of the chain corresponds to Gly70–Gly81. A helical membrane pass occupies residues Leu82 to Phe102. At Ala103–Arg125 the chain is on the cytoplasmic side. Residues Met126–Phe146 traverse the membrane as a helical segment. At Ser147 to Ser164 the chain is on the extracellular side. The helical transmembrane segment at Val165–Ala185 threads the bilayer. The Cytoplasmic portion of the chain corresponds to Tyr186–Gln191. A helical membrane pass occupies residues Leu192–Val212. Residues Thr213 to Val237 are Extracellular-facing. A helical transmembrane segment spans residues Tyr238–Phe258. The Cytoplasmic segment spans residues Gln259–Ser274. Residues Phe275–Gly295 traverse the membrane as a helical segment. The Extracellular portion of the chain corresponds to Ala296–Asp317. N-linked (GlcNAc...) asparagine glycosylation occurs at Asn301. The chain crosses the membrane as a helical span at residues Met318–Gly338. Residues Ala339–Glu376 lie on the Cytoplasmic side of the membrane. The chain crosses the membrane as a helical span at residues Ile377–Leu397. The Extracellular portion of the chain corresponds to Leu398–Trp406. Residues Tyr407 to Ile427 form a helical membrane-spanning segment. The Cytoplasmic segment spans residues Lys428–Ala435. Residues Val436–Leu456 traverse the membrane as a helical segment. Residues Gln457–Thr481 lie on the Extracellular side of the membrane. Residues Leu482–Phe502 form a helical membrane-spanning segment. The interval Phe502–Gln580 is mediates interaction with SEC14L1. The Cytoplasmic segment spans residues Glu503–Gln580. Positions Asp527–Val532 match the Dileucine-like motif motif.

Belongs to the sodium:solute symporter (SSF) (TC 2.A.21) family. As to quaternary structure, homooligomerizes at cell surface. Interacts with SEC14L1; may regulate SLC5A7. Phosphorylated. Expressed in basal forebrain, brain stem, spinal chord, and striatum. Specific for cholinergic neurons.

The protein resides in the presynaptic cell membrane. It localises to the cell projection. Its subcellular location is the axon. It is found in the early endosome membrane. The protein localises to the cytoplasmic vesicle. The protein resides in the secretory vesicle. It localises to the synaptic vesicle membrane. It catalyses the reaction choline(out) + n Na(+)(out) = choline(in) + n Na(+)(in). Choline uptake activity is regulated by SLC5A7/CHT1 internalization (inactive form) from the cell surface and recycling of internalized SLC5A7/CHT1 into the cell surface (active form). Activated by extracellular chloride ion. Specifically inhibited by nanomolar concentrations of hemicholinium 3. High-affinity Na(+)-coupled choline transmembrane symporter. Functions as an electrogenic, voltage-dependent transporter with variable charge/choline stoichiometry. Choline uptake and choline-induced current is also Cl(-)-dependent where Cl(-) is likely a regulatory ion rather than cotransported ion. Plays a critical role in acetylcholine (ACh) synthesis by taking up the substrate choline from the synaptic cleft into the presynaptic nerve terminals after neurotransmitter release. SLC5A7/CHT1-mediated choline high-affinity transport in cholinergic neurons is the rate-limiting step for production of ACh, thereby facilitating communication by subsequent action potentials. Localized predominantly in presynaptic terminal intracellular organelles, and translocated to the plasma membrane in active form in response to neuronal activity. This chain is High affinity choline transporter 1, found in Rattus norvegicus (Rat).